Here is a 727-residue protein sequence, read N- to C-terminus: Pollen-specific leucine-rich repeat extensin-like protein 3 (727 aa).

The N-terminal stretch at 1-22 (MPHIYKQPLGIFQGFVPTLTDA) is a signal peptide. The LRR 1 repeat unit spans residues 19 to 43 (LTDAEVSFIAQRQLLTLPENGELPD). An N-linked (GlcNAc...) asparagine glycan is attached at Asn-80. LRR repeat units lie at residues 107 to 131 (VAVVAGVDLNGADIAGHLPAELGLM), 132 to 154 (TDVAMFHLNSNRFCGIIPKSFEK), 156 to 179 (SLMHEFDVSNNRFVGPFPSVVLSW), 180 to 202 (PAVKFIDVRYNDFEGQVPPELFK), 203 to 226 (KDLDAIFLNNNRFTSTIPDSLGES), 228 to 249 (ASVVTFAHNKFSGCIPRSIGNM), 250 to 273 (KNLNEIIFKDNSLGGCFPSEIGKL), 275 to 296 (NVNVFDASMNSFTGVLPPSFVG), and 297 to 321 (LTSMEEFDISGNKLTGFIPENICKL). Asn-326 is a glycosylation site (N-linked (GlcNAc...) asparagine). A disordered region spans residues 381–727 (SKDKCAGGSS…SPPPPMFQGY (347 aa)). Pro residues-rich tracts occupy residues 397–419 (SPSPVPTRPVHKPQPPKESPQPN), 446–457 (SPPPASSPPTSP), 466–479 (VHKPQPPKESPQPN), 492–677 (SPPP…PKMS), and 718–727 (SPPPPMFQGY). The segment at 432-727 (SPPPPQQPHH…SPPPPMFQGY (296 aa)) is contains the Ser-Pro(4) repeats.

In terms of processing, hydroxylated on proline residues in the S-P-P-P-P repeat. O-glycosylated on hydroxyprolines. In terms of tissue distribution, expressed in flowers, stamen, pollen, and pollinated carpels.

The protein resides in the secreted. Its subcellular location is the cell wall. Its function is as follows. Modulates cell morphogenesis by regulating cell wall formation and assembly, and/or growth polarization. This is Pollen-specific leucine-rich repeat extensin-like protein 3 (PEX3) from Arabidopsis thaliana (Mouse-ear cress).